The sequence spans 114 residues: Hydrogenase maturation factor HypA (114 aa).

Residue His-2 coordinates Ni(2+). Zn(2+) is bound by residues Cys-73, Cys-76, Cys-90, and Cys-93.

This sequence belongs to the HypA/HybF family.

Involved in the maturation of [NiFe] hydrogenases. Required for nickel insertion into the metal center of the hydrogenase. The protein is Hydrogenase maturation factor HypA of Klebsiella pneumoniae (strain 342).